Here is a 716-residue protein sequence, read N- to C-terminus: Translation initiation factor IF-2 (716 aa).

The disordered stretch occupies residues 50 to 137; sequence FKKSAKPAGN…KPKKELPEKI (88 aa). Positions 92–101 are enriched in low complexity; it reads NNVQNTQFNN. Positions 102 to 118 are enriched in basic residues; that stretch reads KNKKKNNNNKKNKRGKN. Residues 125–137 are compositionally biased toward basic and acidic residues; it reads KQFKPKKELPEKI. Residues 217–386 form the tr-type G domain; the sequence is IRPPVVTIMG…LLVSEVEELK (170 aa). Residues 226 to 233 form a G1 region; it reads GHVDHGKT. 226–233 contacts GTP; the sequence is GHVDHGKT. The segment at 251–255 is G2; the sequence is GITQH. The tract at residues 272-275 is G3; sequence DTPG. GTP is bound by residues 272 to 276 and 326 to 329; these read DTPGH and NKID. The tract at residues 326–329 is G4; it reads NKID. The segment at 362–364 is G5; it reads SAL.

Belongs to the TRAFAC class translation factor GTPase superfamily. Classic translation factor GTPase family. IF-2 subfamily.

It localises to the cytoplasm. One of the essential components for the initiation of protein synthesis. Protects formylmethionyl-tRNA from spontaneous hydrolysis and promotes its binding to the 30S ribosomal subunits. Also involved in the hydrolysis of GTP during the formation of the 70S ribosomal complex. In Bacillus licheniformis (strain ATCC 14580 / DSM 13 / JCM 2505 / CCUG 7422 / NBRC 12200 / NCIMB 9375 / NCTC 10341 / NRRL NRS-1264 / Gibson 46), this protein is Translation initiation factor IF-2.